The primary structure comprises 1464 residues: Alpha-glucan water dikinase, chloroplastic (1464 aa).

Residues 1–77 (MSNSLGNNLL…KRAFSSSPHA (77 aa)) constitute a chloroplast transit peptide. Residue His1069 is the Tele-phosphohistidine intermediate of the active site.

It belongs to the PEP-utilizing enzyme family. Homodimer. The cofactor is Mg(2+). In terms of tissue distribution, expressed in leaves.

It localises to the plastid. It is found in the chloroplast. It catalyses the reaction [(1-&gt;4)-alpha-D-glucosyl](n) + n ATP + n H2O = [(1-&gt;4)-6-phospho-alpha-D-glucosyl](n) + n AMP + n phosphate + 2n H(+). The enzyme catalyses ATP + protein L-histidine = ADP + protein N-phospho-L-histidine.. Functionally, mediates the incorporation of phosphate into starch-like alpha-glucan, mostly at the C-6 position of glucose units. Acts as an overall regulator of starch mobilization. Required for starch degradation, suggesting that the phosphate content of starch regulates its degradability. More active on alpha-1,6 branched amylopectin. This is Alpha-glucan water dikinase, chloroplastic (R1) from Solanum tuberosum (Potato).